Consider the following 114-residue polypeptide: Histone H3-3 (114 aa).

Residues 1-17 (NTGGKAPRKHIAHKQAK) show a composition bias toward basic residues. The disordered stretch occupies residues 1–32 (NTGGKAPRKHIAHKQAKKSSAAAATGGVKKPH). Low complexity predominate over residues 18–28 (KSSAAAATGGV).

It belongs to the histone H3 family. As to quaternary structure, the nucleosome is a histone octamer containing two molecules each of H2A, H2B, H3 and H4 assembled in one H3-H4 heterotetramer and two H2A-H2B heterodimers. The octamer wraps approximately 147 bp of DNA.

It localises to the nucleus. The protein localises to the chromosome. In terms of biological role, core component of nucleosome. Nucleosomes wrap and compact DNA into chromatin, limiting DNA accessibility to the cellular machineries which require DNA as a template. Histones thereby play a central role in transcription regulation, DNA repair, DNA replication and chromosomal stability. DNA accessibility is regulated via a complex set of post-translational modifications of histones, also called histone code, and nucleosome remodeling. The protein is Histone H3-3 (H3-3) of Stylonychia lemnae (Ciliate).